Reading from the N-terminus, the 481-residue chain is Trigger factor (481 aa).

The 88-residue stretch at 174-261 (GDIAVVGFKG…LKDLKTRELP (88 aa)) folds into the PPIase FKBP-type domain. The disordered stretch occupies residues 430-481 (ENSTVTEKAPEAESDAAKASKPAAAKKDASKAKTAKTSKAKTAKAESESAES). Residues 437-447 (KAPEAESDAAK) show a composition bias toward basic and acidic residues. Residues 462 to 471 (KTAKTSKAKT) are compositionally biased toward basic residues. Over residues 472–481 (AKAESESAES) the composition is skewed to basic and acidic residues.

It belongs to the FKBP-type PPIase family. Tig subfamily.

It localises to the cytoplasm. The enzyme catalyses [protein]-peptidylproline (omega=180) = [protein]-peptidylproline (omega=0). Functionally, involved in protein export. Acts as a chaperone by maintaining the newly synthesized protein in an open conformation. Functions as a peptidyl-prolyl cis-trans isomerase. This is Trigger factor from Synechococcus sp. (strain WH7803).